Consider the following 78-residue polypeptide: Large ribosomal subunit protein bL28 (78 aa).

Residues 1–22 (MAKVCQVTGKRPVTGHNVSHAK) form a disordered region.

It belongs to the bacterial ribosomal protein bL28 family.

The polypeptide is Large ribosomal subunit protein bL28 (Saccharophagus degradans (strain 2-40 / ATCC 43961 / DSM 17024)).